The chain runs to 394 residues: ATP phosphoribosyltransferase regulatory subunit (394 aa).

The protein belongs to the class-II aminoacyl-tRNA synthetase family. HisZ subfamily. As to quaternary structure, heteromultimer composed of HisG and HisZ subunits.

The protein resides in the cytoplasm. It participates in amino-acid biosynthesis; L-histidine biosynthesis; L-histidine from 5-phospho-alpha-D-ribose 1-diphosphate: step 1/9. In terms of biological role, required for the first step of histidine biosynthesis. May allow the feedback regulation of ATP phosphoribosyltransferase activity by histidine. This Geobacillus thermodenitrificans (strain NG80-2) protein is ATP phosphoribosyltransferase regulatory subunit.